The following is a 423-amino-acid chain: Citrate synthase-like protein clz17 (423 aa).

Catalysis depends on residues His357 and Asp413.

It belongs to the citrate synthase family.

It participates in secondary metabolite biosynthesis. In terms of biological role, citrate synthase-like protein; part of the gene cluster that mediates the biosynthesis of squalestatin S1 (SQS1, also known as zaragozic acid A), a heavily oxidized fungal polyketide that offers potent cholesterol lowering activity by targeting squalene synthase (SS). SQS1 is composed of a 2,8-dioxobicyclic[3.2.1]octane-3,4,5-tricarboxyclic acid core that is connected to two lipophilic polyketide arms. These initial steps feature the priming of an unusual benzoic acid starter unit onto the highly reducing polyketide synthase clz14, followed by oxaloacetate extension and product release to generate a tricarboxylic acid containing product. The phenylalanine ammonia lyase (PAL) clz10 and the acyl-CoA ligase clz12 are involved in transforming phenylalanine into benzoyl-CoA. The citrate synthase-like protein clz17 is involved in connecting the C-alpha-carbons of the hexaketide chain and oxaloacetate to afford the tricarboxylic acid unit. The potential hydrolytic enzymes, clz11 and clz13, are in close proximity to pks2 and may participate in product release. On the other side, the tetraketide arm is synthesized by a the squalestatin tetraketide synthase clz2 and enzymatically esterified to the core in the last biosynthetic step, by the acetyltransferase clz6. The biosynthesis of the tetraketide must involve 3 rounds of chain extension. After the first and second rounds methyl-transfer occurs, and in all rounds of extension the ketoreductase and dehydratase are active. The enoyl reductase and C-MeT of clz2 are not active in the final round of extension. The acetyltransferase clz6 appears to have a broad substrate selectivity for its acyl CoA substrate, allowing the in vitro synthesis of novel squalestatins. The biosynthesis of SQS1 requires several oxidative steps likely performed by oxidoreductases clz3, clz15 and clz16. Finally, in support of the identification of the cluster as being responsible for SQS1 production, the cluster contains a gene encoding a putative squalene synthase (SS) clz20, suggesting a likely mechanism for self-resistance. This is Citrate synthase-like protein clz17 from Cochliobolus lunatus (Filamentous fungus).